A 618-amino-acid polypeptide reads, in one-letter code: MKSLRLPATVLFCLLLLIKGLGAAPPGHPEAQPPPPSSEHKEPVAGDAVLGSKDVSALEVRAARNSEPQDEGELFQGVDPRALAAVLLQALDRPASPPAPGGSQQRPEEETAESLLTETVRSQTHSLPVPETQAPAAPPRPQTQENGAEAPDPSEELEALASLLQELRDFSPSSAKRQQETAAAETETRTHTLTRVNLESPGPERVWRASWGEFQARVPERAPLPPPAPPQFQARVPESGPLPEAHQFGGGSSPKTHLGEALAPLSKAYQGLAAPFPKARRPETSLLGGTEAGERLLQQGLAQVEAGRRQAEATRQAAAQEERLADLASDLLLQYLLQGGARQRGLGGRGLQEEEGGGRETARQQEEAEQERRGGEERVGEEDEEAAEAEAEAEEAERARQNALLFAEEEEGEAGAEDKRSREETPGHRRKEAEGAEEGGAEDEDDDEEMDPQTIDSLIELSTKLHLPADDVVSIIEEVEEKRKRKKNAPPEPVPPPRAAPAPTHARSPKTPPPAPAPDREELPDGNEELPPRDRXENEVFSPVPYHPFPNYIRARTVQPPPASRRRHYHHALPPSRHYPDREAQARRAQEEAEAEERRLQEQEELENYIEHVLLRRP.

The signal sequence occupies residues 1–23; it reads MKSLRLPATVLFCLLLLIKGLGA. 3 disordered regions span residues 23–46, 86–201, and 219–262; these read AAPP…PVAG, VLLQ…LESP, and PERA…GEAL. Over residues 26 to 37 the composition is skewed to pro residues; the sequence is PGHPEAQPPPPS. Residues 180–195 show a composition bias toward low complexity; the sequence is ETAAAETETRTHTLTR. Positions 301–332 form a coiled coil; sequence LAQVEAGRRQAEATRQAAAQEERLADLASDLL. Gln310 bears the Pyrrolidone carboxylic acid mark. The segment at 342-603 is disordered; it reads RQRGLGGRGL…EAEERRLQEQ (262 aa). Positions 356–378 are enriched in basic and acidic residues; the sequence is GGGRETARQQEEAEQERRGGEER. Residues 379-395 show a composition bias toward acidic residues; that stretch reads VGEEDEEAAEAEAEAEE. The span at 416–434 shows a compositional bias: basic and acidic residues; it reads AEDKRSREETPGHRRKEAE. A Phosphoserine modification is found at Ser421. Thr425 bears the Phosphothreonine mark. Acidic residues predominate over residues 435–451; it reads GAEEGGAEDEDDDEEMD. The segment covering 490 to 500 has biased composition (pro residues); it reads PPEPVPPPRAA. Residues 578–602 are compositionally biased toward basic and acidic residues; sequence HYPDREAQARRAQEEAEAEERRLQE.

In terms of processing, multiple peptides are derived from VGF, with activities in synaptic plasticity, antidepression, penile erection, autonomic activation, and increases in energy expenditure.

The protein resides in the secreted. The protein localises to the cytoplasmic vesicle. It localises to the secretory vesicle. Its function is as follows. Secreted polyprotein that is packaged and proteolytically processed by prohormone convertases PCSK1 and PCSK2 in a cell-type-specific manner. VGF and peptides derived from its processing play many roles in neurogenesis and neuroplasticity associated with learning, memory, depression and chronic pain. Functionally, plays a role in the control of body fluid homeostasis by regulating vasopressin release. Suppresses presynaptic glutamatergic neurons connected to vasopressin neurons. Plays a role in the control of body fluid homeostasis by regulating vasopressin release. Activates GABAergic interneurons which are inhibitory neurons of the nervous system and thereby suppresses presynaptic glutamatergic neurons. Also stimulates feeding behavior in an orexin-dependent manner in the hypothalamus. Functions as a positive regulator for the activation of orexin neurons resulting in elevated gastric acid secretion and gastric emptying. The polypeptide is Neurosecretory protein VGF (Bos taurus (Bovine)).